The chain runs to 142 residues: Mediator of RNA polymerase II transcription subunit 9 (142 aa).

The disordered stretch occupies residues 1 to 58; that stretch reads MASSGVAGGRQAEDTLQPPPELLPESKPPPPPQPLPVAALPPPAAPRPQSPAGAKEEN. Ala2 carries the N-acetylalanine modification. Residues 17 to 49 show a composition bias toward pro residues; it reads QPPPELLPESKPPPPPQPLPVAALPPPAAPRPQ. The stretch at 78 to 134 forms a coiled coil; sequence DLHQDLNALKTKFQELRKLIGTMPGIHVSPEQQQQQLHSLREQVRTKNELLQKYKSL. Ser106 is modified (phosphoserine).

It belongs to the Mediator complex subunit 9 family. Component of the Mediator complex, which is composed of MED1, MED4, MED6, MED7, MED8, MED9, MED10, MED11, MED12, MED13, MED13L, MED14, MED15, MED16, MED17, MED18, MED19, MED20, MED21, MED22, MED23, MED24, MED25, MED26, MED27, MED29, MED30, MED31, CCNC, CDK8 and CDC2L6/CDK11. The MED12, MED13, CCNC and CDK8 subunits form a distinct module termed the CDK8 module. Mediator containing the CDK8 module is less active than Mediator lacking this module in supporting transcriptional activation. Individual preparations of the Mediator complex lacking one or more distinct subunits have been variously termed ARC, CRSP, DRIP, PC2, SMCC and TRAP.

It localises to the nucleus. Its function is as follows. Component of the Mediator complex, a coactivator involved in the regulated transcription of nearly all RNA polymerase II-dependent genes. Mediator functions as a bridge to convey information from gene-specific regulatory proteins to the basal RNA polymerase II transcription machinery. Mediator is recruited to promoters by direct interactions with regulatory proteins and serves as a scaffold for the assembly of a functional preinitiation complex with RNA polymerase II and the general transcription factors. The protein is Mediator of RNA polymerase II transcription subunit 9 (Med9) of Mus musculus (Mouse).